The following is a 200-amino-acid chain: ATP-dependent Clp protease proteolytic subunit (200 aa).

Serine 101 functions as the Nucleophile in the catalytic mechanism. Residue histidine 126 is part of the active site.

This sequence belongs to the peptidase S14 family. Component of the chloroplastic Clp protease core complex.

The protein resides in the plastid. The protein localises to the chloroplast stroma. The enzyme catalyses Hydrolysis of proteins to small peptides in the presence of ATP and magnesium. alpha-casein is the usual test substrate. In the absence of ATP, only oligopeptides shorter than five residues are hydrolyzed (such as succinyl-Leu-Tyr-|-NHMec, and Leu-Tyr-Leu-|-Tyr-Trp, in which cleavage of the -Tyr-|-Leu- and -Tyr-|-Trp bonds also occurs).. Functionally, cleaves peptides in various proteins in a process that requires ATP hydrolysis. Has a chymotrypsin-like activity. Plays a major role in the degradation of misfolded proteins. In Adiantum capillus-veneris (Maidenhair fern), this protein is ATP-dependent Clp protease proteolytic subunit.